Consider the following 84-residue polypeptide: Cell division topological specificity factor (84 aa).

It belongs to the MinE family.

Prevents the cell division inhibition by proteins MinC and MinD at internal division sites while permitting inhibition at polar sites. This ensures cell division at the proper site by restricting the formation of a division septum at the midpoint of the long axis of the cell. The chain is Cell division topological specificity factor from Azotobacter vinelandii (strain DJ / ATCC BAA-1303).